Here is a 440-residue protein sequence, read N- to C-terminus: Probable D-serine dehydratase (440 aa).

Lysine 111 is modified (N6-(pyridoxal phosphate)lysine).

Belongs to the serine/threonine dehydratase family. DsdA subfamily. The cofactor is pyridoxal 5'-phosphate.

It catalyses the reaction D-serine = pyruvate + NH4(+). The polypeptide is Probable D-serine dehydratase (Rhizobium leguminosarum bv. trifolii (strain WSM2304)).